A 368-amino-acid polypeptide reads, in one-letter code: Phospho-N-acetylmuramoyl-pentapeptide-transferase (368 aa).

9 consecutive transmembrane segments (helical) span residues A30 to L50, L72 to A92, V99 to M119, V139 to L159, L170 to S190, G201 to A221, G238 to F258, E264 to I286, and K345 to L365.

This sequence belongs to the glycosyltransferase 4 family. MraY subfamily. It depends on Mg(2+) as a cofactor.

Its subcellular location is the cell inner membrane. The enzyme catalyses UDP-N-acetyl-alpha-D-muramoyl-L-alanyl-gamma-D-glutamyl-meso-2,6-diaminopimeloyl-D-alanyl-D-alanine + di-trans,octa-cis-undecaprenyl phosphate = di-trans,octa-cis-undecaprenyl diphospho-N-acetyl-alpha-D-muramoyl-L-alanyl-D-glutamyl-meso-2,6-diaminopimeloyl-D-alanyl-D-alanine + UMP. It participates in cell wall biogenesis; peptidoglycan biosynthesis. Functionally, catalyzes the initial step of the lipid cycle reactions in the biosynthesis of the cell wall peptidoglycan: transfers peptidoglycan precursor phospho-MurNAc-pentapeptide from UDP-MurNAc-pentapeptide onto the lipid carrier undecaprenyl phosphate, yielding undecaprenyl-pyrophosphoryl-MurNAc-pentapeptide, known as lipid I. This Chlorobium limicola (strain DSM 245 / NBRC 103803 / 6330) protein is Phospho-N-acetylmuramoyl-pentapeptide-transferase.